A 385-amino-acid polypeptide reads, in one-letter code: DNA replication and repair protein RecF (385 aa).

30–37 contributes to the ATP binding site; it reads GPNGYGKT.

It belongs to the RecF family.

The protein resides in the cytoplasm. Its function is as follows. The RecF protein is involved in DNA metabolism; it is required for DNA replication and normal SOS inducibility. RecF binds preferentially to single-stranded, linear DNA. It also seems to bind ATP. The protein is DNA replication and repair protein RecF of Mycobacterium bovis (strain ATCC BAA-935 / AF2122/97).